Reading from the N-terminus, the 387-residue chain is Protein FAM153B (387 aa).

Disordered regions lie at residues 233–256 (SYNGEEEDPEEVKTSLGVPQRGDL) and 327–374 (TITG…KKSR). The span at 336-345 (SASPSSAPAE) shows a compositional bias: low complexity. A compositionally biased stretch (basic and acidic residues) spans 347–359 (ATEKTKVEEEVKT). Residues 360 to 374 (RKPKKKTRKPSKKSR) are compositionally biased toward basic residues.

It belongs to the FAM153 family.

The sequence is that of Protein FAM153B (FAM153B) from Homo sapiens (Human).